We begin with the raw amino-acid sequence, 116 residues long: Putative pterin-4-alpha-carbinolamine dehydratase (116 aa).

Belongs to the pterin-4-alpha-carbinolamine dehydratase family.

The enzyme catalyses (4aS,6R)-4a-hydroxy-L-erythro-5,6,7,8-tetrahydrobiopterin = (6R)-L-erythro-6,7-dihydrobiopterin + H2O. The protein is Putative pterin-4-alpha-carbinolamine dehydratase of Xylella fastidiosa (strain M12).